A 58-amino-acid polypeptide reads, in one-letter code: INKDCLLPMDVGRCRASHPRYYYNSSSKRCEKFIYGGCRGNANNFHTLEECEKVCGVR.

Residues 5-55 (CLLPMDVGRCRASHPRYYYNSSSKRCEKFIYGGCRGNANNFHTLEECEKVC) enclose the BPTI/Kunitz inhibitor domain. Cystine bridges form between Cys-5–Cys-55, Cys-14–Cys-38, and Cys-30–Cys-51.

Belongs to the venom Kunitz-type family. Sea anemone type 2 potassium channel toxin subfamily.

Its subcellular location is the secreted. The protein resides in the nematocyst. Functionally, dual-function toxin that inhibits both the serine protease trypsin (Kd&lt;30 nM) and voltage-gated potassium channels Kv1.2/KCNA2 (IC(50)=2800 nM). The sequence is that of KappaPI-actitoxin-Avd3b from Anemonia sulcata (Mediterranean snakelocks sea anemone).